The primary structure comprises 154 residues: MILTVKPLQGKECNVQVTEDEKVSTVKELVSERLNIPPNQQRLLYKGKALADEHRLSDYSIGPEAKLNLVVRPAGERSGVTGMASSNSAVGGVWQTLSTVLAKHFSPADAAKVQEQLIKDYERSLRQLSLDDIERLAVRLLHPDSEGMDTSYLD.

One can recognise a Ubiquitin-like domain in the interval 1–76 (MILTVKPLQG…LNLVVRPAGE (76 aa)).

As to quaternary structure, component of the bag6/bat3 complex.

It localises to the cytoplasm. The protein localises to the cytosol. Its subcellular location is the nucleus. Functionally, as part of a cytosolic protein quality control complex, the bag6/bat3 complex, maintains misfolded and hydrophobic patches-containing proteins in a soluble state and participates in their proper delivery to the endoplasmic reticulum or alternatively can promote their sorting to the proteasome where they undergo degradation. The bag6/bat3 complex is involved in the post-translational delivery of tail-anchored/type II transmembrane proteins to the endoplasmic reticulum membrane. Similarly, the bag6/bat3 complex also functions as a sorting platform for proteins of the secretory pathway that are mislocalized to the cytosol either delivering them to the proteasome for degradation or to the endoplasmic reticulum. The bag6/bat3 complex also plays a role in the endoplasmic reticulum-associated degradation (ERAD), a quality control mechanism that eliminates unwanted proteins of the endoplasmic reticulum through their retrotranslocation to the cytosol and their targeting to the proteasome. It maintains these retrotranslocated proteins in an unfolded yet soluble state condition in the cytosol to ensure their proper delivery to the proteasome. This is Ubiquitin-like protein 4A (ubl4a) from Esox lucius (Northern pike).